Reading from the N-terminus, the 344-residue chain is Dihydroorotate dehydrogenase (quinone) (344 aa).

FMN contacts are provided by residues 61 to 65 (AGLDK) and T85. Residue K65 coordinates substrate. A substrate-binding site is contributed by 110-114 (NRMGF). Positions 138 and 171 each coordinate FMN. N171 provides a ligand contact to substrate. S174 acts as the Nucleophile in catalysis. A substrate-binding site is contributed by N176. Positions 216 and 244 each coordinate FMN. Substrate is bound at residue 245–246 (NT). FMN-binding positions include G267, G296, and 317–318 (YS).

The protein belongs to the dihydroorotate dehydrogenase family. Type 2 subfamily. In terms of assembly, monomer. Requires FMN as cofactor.

The protein localises to the cell membrane. The enzyme catalyses (S)-dihydroorotate + a quinone = orotate + a quinol. It functions in the pathway pyrimidine metabolism; UMP biosynthesis via de novo pathway; orotate from (S)-dihydroorotate (quinone route): step 1/1. Functionally, catalyzes the conversion of dihydroorotate to orotate with quinone as electron acceptor. This Psychrobacter sp. (strain PRwf-1) protein is Dihydroorotate dehydrogenase (quinone).